A 198-amino-acid polypeptide reads, in one-letter code: Dual specificity protein phosphatase 14 (198 aa).

One can recognise a Tyrosine-protein phosphatase domain in the interval 26–167 (GIAQITSSLF…LIDYERQLFG (142 aa)). The active-site Phosphocysteine intermediate is Cys-111.

Belongs to the protein-tyrosine phosphatase family. Non-receptor class dual specificity subfamily. Interacts with CD28.

It carries out the reaction O-phospho-L-tyrosyl-[protein] + H2O = L-tyrosyl-[protein] + phosphate. The catalysed reaction is O-phospho-L-seryl-[protein] + H2O = L-seryl-[protein] + phosphate. It catalyses the reaction O-phospho-L-threonyl-[protein] + H2O = L-threonyl-[protein] + phosphate. Involved in the inactivation of MAP kinases. Dephosphorylates ERK, JNK and p38 MAP-kinases. Plays a negative role in TCR signaling by dephosphorylating MAP3K7 adapter TAB1 leading to its inactivation. The protein is Dual specificity protein phosphatase 14 (DUSP14) of Bos taurus (Bovine).